Here is a 900-residue protein sequence, read N- to C-terminus: Probable 2-oxoadipate dehydrogenase complex component E1 homolog (900 aa).

Belongs to the alpha-ketoglutarate dehydrogenase family. Thiamine diphosphate is required as a cofactor.

The protein localises to the mitochondrion. It carries out the reaction N(6)-[(R)-lipoyl]-L-lysyl-[protein] + 2-oxoadipate + H(+) = N(6)-[(R)-S(8)-glutaryldihydrolipoyl]-L-lysyl-[protein] + CO2. Its function is as follows. 2-oxoadipate dehydrogenase (E1a) component of the 2-oxoadipate dehydrogenase complex (OADHC). Participates in the first step, rate limiting for the overall conversion of 2-oxoadipate (alpha-ketoadipate) to glutaryl-CoA and CO(2) catalyzed by the whole OADHC. Catalyzes the irreversible decarboxylation of 2-oxoadipate via the thiamine diphosphate (ThDP) cofactor and subsequent transfer of the decarboxylated acyl intermediate on an oxidized dihydrolipoyl group that is covalently amidated to the E2 enzyme (dihydrolipoyllysine-residue succinyltransferase or DLST). This chain is Probable 2-oxoadipate dehydrogenase complex component E1 homolog (odhA), found in Dictyostelium discoideum (Social amoeba).